The chain runs to 157 residues: MPRKGPVKKREILPDPVYNDKVVAKLINKVMYDGKKSIAQKIVYGAFDIVREKTGKDPLEVLEAALNNVMPVLEVRPRRVGGATYQIPIEVSPDRRLSLGIRWLVEYARERKDKRTMKEKLAAEIMDAANNTGGAVKKKEDTHRMAEANRAFAHYRW.

Belongs to the universal ribosomal protein uS7 family. Part of the 30S ribosomal subunit. Contacts proteins S9 and S11.

Its function is as follows. One of the primary rRNA binding proteins, it binds directly to 16S rRNA where it nucleates assembly of the head domain of the 30S subunit. Is located at the subunit interface close to the decoding center, probably blocks exit of the E-site tRNA. The protein is Small ribosomal subunit protein uS7 of Caldicellulosiruptor saccharolyticus (strain ATCC 43494 / DSM 8903 / Tp8T 6331).